The primary structure comprises 425 residues: Metacaspase-1 (425 aa).

Positions 1–110 are disordered; that stretch reads MSYNSNPYNG…PQLPNTQTQS (110 aa). A compositionally biased stretch (low complexity) spans 13–28; it reads YPPYNTYTRPNYSPNN. 2 stretches are compositionally biased toward polar residues: residues 29–38 and 88–110; these read GSQSNNTVHQ and TGANSYGNPNYSGPQLPNTQTQS. Residues histidine 214 and cysteine 270 contribute to the active site.

This sequence belongs to the peptidase C14B family.

Its subcellular location is the cytoplasm. The protein localises to the nucleus. Functionally, involved in cell death (apoptosis). This is Metacaspase-1 (pca1) from Schizosaccharomyces pombe (strain 972 / ATCC 24843) (Fission yeast).